The chain runs to 577 residues: Multidrug transporter TPO1_2 (577 aa).

Positions 1–63 (MSSTSSDRPY…ALSKNSTQTS (63 aa)) are disordered. Residues N44 and N58 are each glycosylated (N-linked (GlcNAc...) asparagine). A run of 12 helical transmembrane segments spans residues 137–157 (VMLCIILCLNCISITMGSSIF), 167–187 (IYHVIPVVAILGITLYVLGFA), 204–224 (GVLVISSFGFALFNFAVATAK), 234–254 (FFAGFIGAAPLAVVPAAFADM), 263–283 (AICLFSLGVFVGPILAPVIGS), 293–313 (WLEYVIACFASAIFVAILFFF), 368–388 (PLLLIVTIYNSFVYGILYLLL), 406–426 (ELPYISLIIGMAICGAFIWWM), 446–466 (LLPMVVAGIVFPIGILWFCWT), 475–495 (WIVPTIAGAFTGFGLIGIFLP), 504–526 (YLLIAASAVAANTFMRSGFGAAF), and 541–561 (YAGLLLGLLAVAMIPVPLLFL).

It belongs to the major facilitator superfamily. DHA1 family. Polyamines/proton antiporter (TC 2.A.1.2.16) subfamily.

It localises to the cell membrane. Multidrug resistance transporter involved in resistance to azole antifungal drugs such as the imidazoles miconazole, ketoconazole, and tioconazole; as well as the triazoles itraconazole and fluconazole. Also plays a role in the resistance to other antifungal drug families such as the polyene amphotericin B, the pyrimide analog flucytosine, the fungicide mancozeb, and the polyamine spermine. Decreases the intracellular accumulation of clotrimazole by mediating its extrusion from cells. Plays a role in biofilm formation. In Candida glabrata (strain ATCC 2001 / BCRC 20586 / JCM 3761 / NBRC 0622 / NRRL Y-65 / CBS 138) (Yeast), this protein is Multidrug transporter TPO1_2.